Here is a 329-residue protein sequence, read N- to C-terminus: Bifunctional muramidase/DL-endopeptidase CwlT (329 aa).

The first 29 residues, 1–29, serve as a signal peptide directing secretion; the sequence is MISKKVVLPLVFSAPFIFFFVLCIVVVMT. The tract at residues 59 to 192 is muramidase; that stretch reads RFRAVFEKYA…SYVDHVMRYV (134 aa). The region spanning 206-329 is the NlpC/P60 domain; it reads MDFYETVMKE…DHLVSFGRIK (124 aa). The Nucleophile role is filled by cysteine 237. Catalysis depends on histidine 290, which acts as the Proton acceptor. Residue asparagine 302 is part of the active site.

This sequence belongs to the peptidase C40 family.

The protein resides in the secreted. The enzyme catalyses Hydrolysis of (1-&gt;4)-beta-linkages between N-acetylmuramic acid and N-acetyl-D-glucosamine residues in a peptidoglycan and between N-acetyl-D-glucosamine residues in chitodextrins.. In terms of biological role, exhibits both muramidase and DL-endopeptidase activities. The N-terminal region acts as a N-acetylmuramidase, which cleaves the bond between N-acetylmuramic acid and N-acetyl-D-glucosamine (MurNAc-GlcNAc) in peptidoglycan. The C-terminal region acts as a DL-endopeptidase that cleaves the bond between D-gamma-glutamate and meso-diaminopimelic acid. Cannot degrade purified B.anthracis peptidoglycan, which differ from those of B.subtilis. CwlT is required for ICEBs1 conjugation: the muramidase activity is essential, whereas the peptidase activity is partially dispensable for transfer of ICEBs1. This is Bifunctional muramidase/DL-endopeptidase CwlT from Bacillus subtilis (strain 168).